Reading from the N-terminus, the 352-residue chain is Peptide chain release factor 1 (352 aa).

Residue glutamine 233 is modified to N5-methylglutamine. The disordered stretch occupies residues 288 to 309 (NAKDRKEQVGSGDRSERIRTYN). Residues 289-306 (AKDRKEQVGSGDRSERIR) show a composition bias toward basic and acidic residues.

Belongs to the prokaryotic/mitochondrial release factor family. In terms of processing, methylated by PrmC. Methylation increases the termination efficiency of RF1.

It localises to the cytoplasm. Functionally, peptide chain release factor 1 directs the termination of translation in response to the peptide chain termination codons UAG and UAA. The protein is Peptide chain release factor 1 of Helicobacter pylori (strain G27).